A 138-amino-acid chain; its full sequence is Transcription antitermination protein NusB (138 aa).

It belongs to the NusB family.

Involved in transcription antitermination. Required for transcription of ribosomal RNA (rRNA) genes. Binds specifically to the boxA antiterminator sequence of the ribosomal RNA (rrn) operons. This chain is Transcription antitermination protein NusB, found in Helicobacter pylori (strain G27).